Consider the following 430-residue polypeptide: Adenylosuccinate synthetase (430 aa).

Residues 12-18 (GDEGKGK) and 40-42 (GHT) contribute to the GTP site. Catalysis depends on Asp13, which acts as the Proton acceptor. 2 residues coordinate Mg(2+): Asp13 and Gly40. IMP-binding positions include 13-16 (DEGK), 38-41 (NAGH), Thr128, Arg142, Gln223, Thr238, and Arg302. His41 serves as the catalytic Proton donor. 298–304 (TTTGRPR) provides a ligand contact to substrate. GTP is bound by residues Arg304, 330–332 (SID), and 412–414 (SVG).

The protein belongs to the adenylosuccinate synthetase family. As to quaternary structure, homodimer. The cofactor is Mg(2+).

The protein localises to the cytoplasm. The enzyme catalyses IMP + L-aspartate + GTP = N(6)-(1,2-dicarboxyethyl)-AMP + GDP + phosphate + 2 H(+). It participates in purine metabolism; AMP biosynthesis via de novo pathway; AMP from IMP: step 1/2. Functionally, plays an important role in the de novo pathway of purine nucleotide biosynthesis. Catalyzes the first committed step in the biosynthesis of AMP from IMP. The chain is Adenylosuccinate synthetase from Streptococcus agalactiae serotype III (strain NEM316).